The chain runs to 2430 residues: Protein TASOR 2 (2430 aa).

Serine 19, serine 219, and serine 384 each carry phosphoserine. Disordered stretches follow at residues 416-488 (LDRK…GETA) and 577-648 (RGTS…SQSS). Serine 685 carries the phosphoserine modification. Positions 704 to 727 (LLLQQKPPDDPVVKPKDRPPSARV) are disordered. Over residues 710–723 (PPDDPVVKPKDRPP) the composition is skewed to basic and acidic residues. Residues serine 1025, serine 1087, and serine 1172 each carry the phosphoserine modification. The segment at 1331-1360 (LTESREVSSADNVSVYPSVSEEPVENKERK) is disordered. Serine 1541 bears the Phosphoserine mark. The tract at residues 1700–1727 (EAELHKETTGPGTAGPQSNTTSSLKGER) is disordered. Residues 1714 to 1723 (GPQSNTTSSL) are compositionally biased toward polar residues. Serine 1848 carries the post-translational modification Phosphoserine. Lysine 2007 participates in a covalent cross-link: Glycyl lysine isopeptide (Lys-Gly) (interchain with G-Cter in SUMO2). Phosphoserine is present on residues serine 2009, serine 2037, serine 2062, and serine 2066. The segment at 2046–2069 (SDPRPQGQPRRGYTASSLDSSSSW) is disordered.

It belongs to the TASOR family.

This chain is Protein TASOR 2, found in Homo sapiens (Human).